Here is a 410-residue protein sequence, read N- to C-terminus: MTVAPSAALSAAARPDARGRFGRFGGKYVPETLMPALSELEAAFAHYRQDPDFQAELQQLLRDYVGRPSPLYFAERLSAHYAHDQVQPQIYLKREDLNHTGAHKINNALGQVLLAKRMGKQRIIAETGAGQHGVATATVCARFGLQCVIYMGVQDMERQRLNVLRMRLLGAEVAPVSAGTGTLKDATSEAIRDWVTNVETTHYILGSVAGPHPYPMLVREFHAVIGAETRQQCLEKWGGLPDILLACVGGGSNAMGLFHEFVEEPQVRLIGVEAAGQGLDTGHHAATLTKGEVGVLHGAMSYLLQDADGQVVEAHSISAGLDYPGVGPEHSYLKDIGRAEYYSVTDTEAVAACVRLAQLEGILPALETAHALAYLETLCPQLTGQPRIVINCSGRGDKDVETIGRYFEAQ.

Residue Lys-104 is modified to N6-(pyridoxal phosphate)lysine.

This sequence belongs to the TrpB family. As to quaternary structure, tetramer of two alpha and two beta chains. Pyridoxal 5'-phosphate serves as cofactor.

It catalyses the reaction (1S,2R)-1-C-(indol-3-yl)glycerol 3-phosphate + L-serine = D-glyceraldehyde 3-phosphate + L-tryptophan + H2O. Its pathway is amino-acid biosynthesis; L-tryptophan biosynthesis; L-tryptophan from chorismate: step 5/5. In terms of biological role, the beta subunit is responsible for the synthesis of L-tryptophan from indole and L-serine. This chain is Tryptophan synthase beta chain, found in Thermosynechococcus vestitus (strain NIES-2133 / IAM M-273 / BP-1).